The sequence spans 162 residues: Phosphopantetheine adenylyltransferase (162 aa).

Ser9 contributes to the substrate binding site. ATP contacts are provided by residues 9 to 10 (SF) and His17. Residues Lys41, Val77, and Lys91 each contribute to the substrate site. ATP is bound by residues 92-94 (GLR), Glu102, and 126-132 (YAFLSSS).

This sequence belongs to the bacterial CoaD family. As to quaternary structure, homohexamer. The cofactor is Mg(2+).

The protein localises to the cytoplasm. The enzyme catalyses (R)-4'-phosphopantetheine + ATP + H(+) = 3'-dephospho-CoA + diphosphate. It functions in the pathway cofactor biosynthesis; coenzyme A biosynthesis; CoA from (R)-pantothenate: step 4/5. Reversibly transfers an adenylyl group from ATP to 4'-phosphopantetheine, yielding dephospho-CoA (dPCoA) and pyrophosphate. The protein is Phosphopantetheine adenylyltransferase of Frankia alni (strain DSM 45986 / CECT 9034 / ACN14a).